The chain runs to 512 residues: SWI/SNF complex subunit SWI3A (512 aa).

The SWIRM domain maps to 13–110 (YTIPAQSSWF…FSSSLKKNDH (98 aa)). The SANT domain maps to 223–274 (SAAAVWTEEEILLLLESVLKHGDDWELISQSVSTKSRLDCISKLIELPFGEF). The interval 291-325 (DENTEQVQTDGQEHEETETREEKEDRVNEDEPPAK) is disordered. The stretch at 424–488 (ALGAAAAQAK…IEGVKETIIQ (65 aa)) forms a coiled coil.

In terms of assembly, homodimers and heterodimers. Interacts with SWI3B, SWI3C, BSH, and the C-terminus of FCA, but not with BRM or SWI3D. Expressed in roots, stems, leaves and flowers, but not in siliques.

It is found in the nucleus. Functionally, component of a multiprotein complex equivalent of the SWI/SNF complex, an ATP-dependent chromatin-remodeling complex, which is required for the positive and negative regulation of gene expression of a large number of genes. It changes chromatin structure by altering DNA-histone contacts within a nucleosome, leading eventually to a change in nucleosome position, thus facilitating or repressing binding of gene-specific transcription factors. This chain is SWI/SNF complex subunit SWI3A (SWI3A), found in Arabidopsis thaliana (Mouse-ear cress).